Here is a 315-residue protein sequence, read N- to C-terminus: Glycine--tRNA ligase alpha subunit (315 aa).

It belongs to the class-II aminoacyl-tRNA synthetase family. As to quaternary structure, tetramer of two alpha and two beta subunits.

Its subcellular location is the cytoplasm. The catalysed reaction is tRNA(Gly) + glycine + ATP = glycyl-tRNA(Gly) + AMP + diphosphate. The polypeptide is Glycine--tRNA ligase alpha subunit (Pseudomonas entomophila (strain L48)).